Here is a 79-residue protein sequence, read N- to C-terminus: Small ribosomal subunit protein bS18 (79 aa).

It belongs to the bacterial ribosomal protein bS18 family. In terms of assembly, part of the 30S ribosomal subunit. Forms a tight heterodimer with protein bS6.

Its function is as follows. Binds as a heterodimer with protein bS6 to the central domain of the 16S rRNA, where it helps stabilize the platform of the 30S subunit. The chain is Small ribosomal subunit protein bS18 from Pseudarthrobacter chlorophenolicus (strain ATCC 700700 / DSM 12829 / CIP 107037 / JCM 12360 / KCTC 9906 / NCIMB 13794 / A6) (Arthrobacter chlorophenolicus).